The chain runs to 124 residues: Small ribosomal subunit protein bS6 (124 aa).

A disordered region spans residues 96-124 (ETGPSPMMKEVQREEAKKAAAAQPTEAQA). Residues 114 to 124 (AAAAQPTEAQA) are compositionally biased toward low complexity.

Belongs to the bacterial ribosomal protein bS6 family.

Functionally, binds together with bS18 to 16S ribosomal RNA. The chain is Small ribosomal subunit protein bS6 from Burkholderia lata (strain ATCC 17760 / DSM 23089 / LMG 22485 / NCIMB 9086 / R18194 / 383).